The primary structure comprises 146 residues: Leptin (146 aa).

Cys-96 and Cys-146 are disulfide-bonded.

This sequence belongs to the leptin family.

Its subcellular location is the secreted. Key player in the regulation of energy balance and body weight control. Once released into the circulation, has central and peripheral effects by binding LEPR, found in many tissues, which results in the activation of several major signaling pathways. In the hypothalamus, acts as an appetite-regulating factor that induces a decrease in food intake and an increase in energy consumption by inducing anorexinogenic factors and suppressing orexigenic neuropeptides, also regulates bone mass and secretion of hypothalamo-pituitary-adrenal hormones. In the periphery, increases basal metabolism, influences reproductive function, regulates pancreatic beta-cell function and insulin secretion, is pro-angiogenic for endothelial cell and affects innate and adaptive immunity. In the arcuate nucleus of the hypothalamus, activates by depolarization POMC neurons inducing FOS and SOCS3 expression to release anorexigenic peptides and inhibits by hyperpolarization NPY neurons inducing SOCS3 with a consequent reduction on release of orexigenic peptides. In addition to its known satiety inducing effect, has a modulatory role in nutrient absorption. In the intestine, reduces glucose absorption by enterocytes by activating PKC and leading to a sequential activation of p38, PI3K and ERK signaling pathways which exerts an inhibitory effect on glucose absorption. Acts as a growth factor on certain tissues, through the activation of different signaling pathways increases expression of genes involved in cell cycle regulation such as CCND1, via JAK2-STAT3 pathway, or VEGFA, via MAPK1/3 and PI3K-AKT1 pathways. May also play an apoptotic role via JAK2-STAT3 pathway and up-regulation of BIRC5 expression. Pro-angiogenic, has mitogenic activity on vascular endothelial cells and plays a role in matrix remodeling by regulating the expression of matrix metalloproteinases (MMPs) and tissue inhibitors of metalloproteinases (TIMPs). In innate immunity, modulates the activity and function of neutrophils by increasing chemotaxis and the secretion of oxygen radicals. Increases phagocytosis by macrophages and enhances secretion of pro-inflammatory mediators. Increases cytotoxic ability of NK cells. Plays a pro-inflammatory role, in synergy with IL1B, by inducing NOS2 which promotes the production of IL6, IL8 and Prostaglandin E2, through a signaling pathway that involves JAK2, PI3K, MAP2K1/MEK1 and MAPK14/p38. In adaptive immunity, promotes the switch of memory T-cells towards T helper-1 cell immune responses. Increases CD4(+)CD25(-) T-cell proliferation and reduces autophagy during TCR (T-cell receptor) stimulation, through MTOR signaling pathway activation and BCL2 up-regulation. This is Leptin (LEP) from Pan troglodytes (Chimpanzee).